A 177-amino-acid chain; its full sequence is Non-specific lipid transfer protein GPI-anchored 22 (177 aa).

The first 29 residues, 1–29 (MARFMAYNQNPQMLALCITVAVMFLGVRS), serve as a signal peptide directing secretion. Disulfide bonds link cysteine 38–cysteine 81, cysteine 48–cysteine 63, cysteine 64–cysteine 108, and cysteine 79–cysteine 117. Asparagine 113 carries N-linked (GlcNAc...) asparagine glycosylation. Serine 152 carries the GPI-anchor amidated serine lipid modification. Residues 153-177 (SSIKGRDNKQFGLMMAGALSIWYIM) constitute a propeptide, removed in mature form.

Belongs to the plant LTP family. In terms of tissue distribution, expressed in seedlings, preferentially in hypocotyls and roots. Also observed in siliques.

Its subcellular location is the cell membrane. In terms of biological role, probable lipid transfer protein. This chain is Non-specific lipid transfer protein GPI-anchored 22, found in Arabidopsis thaliana (Mouse-ear cress).